Consider the following 307-residue polypeptide: G-protein coupled receptor 35 (307 aa).

Topologically, residues 1–18 (MNSTTCNSTLTWPASVNN) are extracellular. N-linked (GlcNAc...) asparagine glycosylation is found at N2 and N7. Residues 19-39 (FFIIYSALLLVLGLLLNSVAL) form a helical membrane-spanning segment. Topologically, residues 40 to 53 (WVFCYRMHQWTETR) are cytoplasmic. Residues 54 to 74 (IYMTNLAVADLCLLCSLPFVL) form a helical membrane-spanning segment. Over 75–88 (YSLKYSSSDTPVCQ) the chain is Extracellular. Cysteines 87 and 160 form a disulfide. A helical transmembrane segment spans residues 89–110 (LSQGIYLANRYMSISLVTAIAV). Residues 111–129 (DRYVAVRHPLRARELRSPR) lie on the Cytoplasmic side of the membrane. A helical membrane pass occupies residues 130-150 (QAAAVCVALWVIVVTSLVVRW). Topologically, residues 151 to 176 (RLGMQEGGFCFSSQTRRNFSTTAFSL) are extracellular. A helical membrane pass occupies residues 177–197 (LGFYLPLAIVVFCSLQVVTVL). The Cytoplasmic portion of the chain corresponds to 198–217 (SRRPAADVGQAEATQKATHM). The helical transmembrane segment at 218-238 (VWANLAVFVICFLPLHVVLTV) threads the bilayer. The Extracellular portion of the chain corresponds to 239–257 (QVSLNLNTCAARDTFSRAL). Residues 258–278 (SITGKLSDTNCCLDAICYYYM) form a helical membrane-spanning segment. At 279-307 (AREFQEASKPATSSNTPHKSQDSQILSLT) the chain is on the cytoplasmic side. S286, S292, S298, and S301 each carry phosphoserine. The interval 288–307 (PATSSNTPHKSQDSQILSLT) is disordered.

Belongs to the G-protein coupled receptor 1 family. Multiply phosphorylated in clusters of serines and threonines in the C-terminal tail. Phosphorylation of Ser-298 and Ser-301 is mediated by GRK5 and/or GRK6. Predominantly expressed in immune and gastrointestinal tissues. Strongly GPR35 expressed in colonic macrophages.

The protein resides in the cell membrane. Functionally, G-protein coupled receptor that binds to several ligands including the tryptophan metabolite kynurenic acid (KYNA), lysophosphatidic acid (LPA) or 5-hydroxyindoleacetic acid (5-HIAA) with high affinity, leading to rapid and transient activation of numerous intracellular signaling pathways. Plays a role in neutrophil recruitment to sites of inflammation and bacterial clearance through the major serotonin metabolite 5-HIAA that acts as a physiological ligand. Stimulates lipid metabolism, thermogenic, and anti-inflammatory gene expression in adipose tissue once activated by kynurenic acid. In macrophages, activation by lysophosphatidic acid promotes GPR35-induced signaling with a distinct transcriptional profile characterized by TNF production associated with ERK and NF-kappa-B activation. In turn, induces chemotaxis of macrophages. The polypeptide is G-protein coupled receptor 35 (Gpr35) (Mus musculus (Mouse)).